The chain runs to 722 residues: Ataxin-7-like protein 2 (722 aa).

Disordered regions lie at residues 106–228 (LSKL…PPKT), 288–317 (NSRK…LPSS), 347–403 (SRAS…DCHY), and 531–600 (AITS…GCRG). Pro residues predominate over residues 181–191 (GKPPMAPPSKE). The SCA7 domain maps to 230–297 (RKMARKECDL…NSRKGESPKE (68 aa)). Positions 290-311 (RKGESPKEKSPGRKEQVLERPS) are enriched in basic and acidic residues. A compositionally biased stretch (low complexity) spans 541 to 556 (PSPSFSKLPPSKASKS). The segment covering 558–569 (KGKDGVEVEAPS) has biased composition (basic and acidic residues). Phosphoserine is present on serine 575.

The polypeptide is Ataxin-7-like protein 2 (ATXN7L2) (Homo sapiens (Human)).